A 499-amino-acid polypeptide reads, in one-letter code: Probable cytosol aminopeptidase (499 aa).

Lys-263 and Asp-268 together coordinate Mn(2+). Lys-275 is an active-site residue. Residues Asp-286, Asp-345, and Glu-347 each contribute to the Mn(2+) site. Residue Arg-349 is part of the active site.

It belongs to the peptidase M17 family. Mn(2+) serves as cofactor.

The protein resides in the cytoplasm. It carries out the reaction Release of an N-terminal amino acid, Xaa-|-Yaa-, in which Xaa is preferably Leu, but may be other amino acids including Pro although not Arg or Lys, and Yaa may be Pro. Amino acid amides and methyl esters are also readily hydrolyzed, but rates on arylamides are exceedingly low.. It catalyses the reaction Release of an N-terminal amino acid, preferentially leucine, but not glutamic or aspartic acids.. Its function is as follows. Presumably involved in the processing and regular turnover of intracellular proteins. Catalyzes the removal of unsubstituted N-terminal amino acids from various peptides. In Bradyrhizobium sp. (strain BTAi1 / ATCC BAA-1182), this protein is Probable cytosol aminopeptidase.